Here is a 580-residue protein sequence, read N- to C-terminus: Acyl-coenzyme A synthetase ACSM3, mitochondrial (580 aa).

Residues 1–21 constitute a mitochondrion transit peptide; sequence MAMLLRARCFHRLAIPDPRRI. Residues K67 and K100 each carry the N6-succinyllysine modification. K151 is modified (N6-acetyllysine). ATP is bound by residues 229-237, 368-373, D455, R470, and K566; these read TSGTTGPPK and EGYGQT.

Belongs to the ATP-dependent AMP-binding enzyme family. It depends on Mg(2+) as a cofactor. Mn(2+) serves as cofactor.

The protein localises to the mitochondrion. It is found in the mitochondrion matrix. It catalyses the reaction a medium-chain fatty acid + ATP + CoA = a medium-chain fatty acyl-CoA + AMP + diphosphate. The catalysed reaction is propanoate + ATP + CoA = propanoyl-CoA + AMP + diphosphate. The enzyme catalyses butanoate + ATP + CoA = butanoyl-CoA + AMP + diphosphate. It carries out the reaction 2-methylpropanoate + ATP + CoA = 2-methylpropanoyl-CoA + AMP + diphosphate. It catalyses the reaction 2-methylbutanoate + ATP + CoA = 2-methylbutanoyl-CoA + AMP + diphosphate. The catalysed reaction is octanoate + ATP + CoA = octanoyl-CoA + AMP + diphosphate. Functionally, catalyzes the activation of fatty acids by CoA to produce an acyl-CoA, the first step in fatty acid metabolism. Capable of activating medium-chain fatty acids with a preference for isobutyrate among fatty acids with 2-6 carbon atoms. The protein is Acyl-coenzyme A synthetase ACSM3, mitochondrial (Acsm3) of Rattus norvegicus (Rat).